Reading from the N-terminus, the 85-residue chain is uncharacterized protein (85 aa).

Belongs to the BolA/IbaG family.

This is an uncharacterized protein from Haemophilus influenzae (strain ATCC 51907 / DSM 11121 / KW20 / Rd).